The sequence spans 206 residues: HTH-type transcriptional regulator BetI (206 aa).

The HTH tetR-type domain maps to 8 to 68; the sequence is PLRRKALVDA…ETIRSLLRDL (61 aa). The H-T-H motif DNA-binding region spans 31–50; the sequence is TMSDIAREAGVSAALAHHYF.

It functions in the pathway amine and polyamine biosynthesis; betaine biosynthesis via choline pathway [regulation]. In terms of biological role, repressor involved in the biosynthesis of the osmoprotectant glycine betaine. It represses transcription of the choline transporter BetT and the genes of BetAB involved in the synthesis of glycine betaine. This is HTH-type transcriptional regulator BetI from Agrobacterium fabrum (strain C58 / ATCC 33970) (Agrobacterium tumefaciens (strain C58)).